A 401-amino-acid polypeptide reads, in one-letter code: 8-amino-7-oxononanoate synthase (401 aa).

Residue Arg-24 participates in substrate binding. 111-112 (GF) contributes to the pyridoxal 5'-phosphate binding site. Substrate is bound at residue His-137. Residues Ser-183, His-211, and Thr-240 each coordinate pyridoxal 5'-phosphate. Position 243 is an N6-(pyridoxal phosphate)lysine (Lys-243). Thr-357 is a substrate binding site.

This sequence belongs to the class-II pyridoxal-phosphate-dependent aminotransferase family. BioF subfamily. Homodimer. Pyridoxal 5'-phosphate is required as a cofactor.

The catalysed reaction is 6-carboxyhexanoyl-[ACP] + L-alanine + H(+) = (8S)-8-amino-7-oxononanoate + holo-[ACP] + CO2. It functions in the pathway cofactor biosynthesis; biotin biosynthesis. Its function is as follows. Catalyzes the decarboxylative condensation of pimeloyl-[acyl-carrier protein] and L-alanine to produce 8-amino-7-oxononanoate (AON), [acyl-carrier protein], and carbon dioxide. This chain is 8-amino-7-oxononanoate synthase, found in Xanthomonas euvesicatoria pv. vesicatoria (strain 85-10) (Xanthomonas campestris pv. vesicatoria).